The following is a 1176-amino-acid chain: Serine/threonine-protein kinase pakF (1176 aa).

Low complexity-rich tracts occupy residues 1–19 and 32–52; these read MSNLKLSNNNNGNQKESSS and NLLNSFSSNNSNNNLSNSGSN. 2 disordered regions span residues 1–231 and 254–361; these read MSNL…HESR and LPST…KKTK. A compositionally biased stretch (pro residues) spans 64 to 76; sequence QLPPNYTPPPPPH. A coiled-coil region spans residues 92 to 133; the sequence is LNNENSDNNNNNNNNNNNNNNNNNNNNNNNNNNNEQLARTES. Composition is skewed to low complexity over residues 93-125, 133-148, and 156-172; these read NNENSDNNNNNNNNNNNNNNNNNNNNNNNNNNN, SSVSIISSSSSGSNSG, and SSNISTDDSNTTTETYS. Over residues 173–197 the composition is skewed to polar residues; that stretch reads MSPNQTLNSNIDSSEQQHQDLSSSV. Low complexity predominate over residues 198–226; the sequence is NNNNNNNNNNNNNNNNNNNNNNNNNNNNN. Residues 254–289 show a composition bias toward polar residues; it reads LPSTPTQQNVEIQTTNGGSSETSPNGLISPRPSNDQ. The segment covering 316 to 353 has biased composition (low complexity); the sequence is SLSSSTTTPSTTSSLTSSPSSSSLAISSPNTTAATTTN. In terms of domain architecture, CRIB spans 370–383; the sequence is ISVPYNVIHKMHVD. A Protein kinase domain is found at 394-646; the sequence is FILDEKLGDG…PIDLLCHPFL (253 aa). ATP is bound by residues 400 to 408 and K423; that span reads LGDGAYGSV. Catalysis depends on D514, which acts as the Proton acceptor. 4 disordered regions span residues 670–723, 753–885, 968–1083, and 1112–1176; these read IDDL…SDEL, QEEE…GNNL, HTTS…TGRA, and NSNS…NIKK. Low complexity-rich tracts occupy residues 682-693 and 710-720; these read SQSSSSSSPQSP and SIISPIPSSPS. Composition is skewed to acidic residues over residues 767-789 and 813-844; these read DEQDDEQDDEDDDDENEDDEDVD and DQDDEEEDEEEDDEEEEEEEEDDDEINEDEEI. The stretch at 812–873 forms a coiled coil; it reads SDQDDEEEDE…NKKKNKKNNL (62 aa). Residues 852-870 are compositionally biased toward basic residues; it reads VRKKKNKSTKKSNKKKNKK. Polar residues-rich tracts occupy residues 873–884 and 968–985; these read LSTIGKSGSGNN and HTTSQPKQMQSKLSATNL. Low complexity-rich tracts occupy residues 991–1044, 1051–1066, and 1148–1176; these read SSSP…RPNS, NNSSTTTTTNSNSSSS, and SSGSGSNSPSLSTNSSSTNSNNSVTNIKK.

This sequence belongs to the protein kinase superfamily. STE Ser/Thr protein kinase family. STE20 subfamily. Mg(2+) is required as a cofactor.

It carries out the reaction L-seryl-[protein] + ATP = O-phospho-L-seryl-[protein] + ADP + H(+). The catalysed reaction is L-threonyl-[protein] + ATP = O-phospho-L-threonyl-[protein] + ADP + H(+). The chain is Serine/threonine-protein kinase pakF from Dictyostelium discoideum (Social amoeba).